The chain runs to 131 residues: Inactive protein FON2 SPARE1 (131 aa).

Residues 67-131 form a disordered region; that stretch reads SPSSLTTTDR…VPTGPNPLHH (65 aa). Residues 76–97 show a composition bias toward basic residues; it reads RHHHHHRHHGHHHHRGHDRWNR.

Belongs to the CLV3/ESR signal peptide family. As to expression, expressed in all aerial apical meristems, including the floral and inflorescence meristems in the reproductive phase and the shoot apical meristem in the vegetative phase. Also detected in the primordia of lateral organs such as the leaf and the floral organs.

Its function is as follows. Non functional suppressor of the fon2 mutation. In Oryza sativa subsp. japonica, the protein has a single amino acid substitution at the putative processing site of the signal peptide while in all the other varieties/species of domesticated and wild rice tested the protein is functional. This Oryza sativa subsp. japonica (Rice) protein is Inactive protein FON2 SPARE1 (FOS1).